We begin with the raw amino-acid sequence, 429 residues long: Integral membrane protein GPR137C (429 aa).

A compositionally biased stretch (low complexity) spans 1-17 (MRVSVPGPAAAAAPAAG). The interval 1–29 (MRVSVPGPAAAAAPAAGREPSTPGGGSGG) is disordered. Residues 1-48 (MRVSVPGPAAAAAPAAGREPSTPGGGSGGGGAVAAASGAAVPGSVQLA) lie on the Lumenal side of the membrane. A helical membrane pass occupies residues 49–69 (LSVLHALLYAALFAFAYLQLW). Topologically, residues 70 to 83 (RLLLYRERRLSYQS) are cytoplasmic. A helical transmembrane segment spans residues 84–104 (LCLFLCLLWAALRTTLFSAAF). Topologically, residues 105-120 (SLSGSLPLLRPPAHLH) are lumenal. Residues 121–141 (FFPHWLLYCFPSCLQFSTLCL) traverse the membrane as a helical segment. At 142–167 (LNLYLAEVICKVRCATELDRHKILLH) the chain is on the cytoplasmic side. The chain crosses the membrane as a helical span at residues 168-188 (LGFIMASLLFLVVNLTCAMLV). The Lumenal segment spans residues 189-205 (HGDVPENQLKWTVFVRA). The helical transmembrane segment at 206-226 (LINDSLFILCAISLVCYICKI) threads the bilayer. The Cytoplasmic segment spans residues 227–246 (TKMSSANVYLESKGMSLCQT). Residues 247-267 (VVVGSVVILLYSSRACYNLVV) form a helical membrane-spanning segment. Residues 268-300 (VTISQDTLESPFNYGWDNLSDKAHVEDISGEEY) lie on the Lumenal side of the membrane. Asn285 carries an N-linked (GlcNAc...) asparagine glycan. The helical transmembrane segment at 301–321 (IVFGMVLFLWEHVPAWSVVLF) threads the bilayer. At 322–429 (FRAQRLNQNL…HHSLYVTPQN (108 aa)) the chain is on the cytoplasmic side.

Belongs to the GPR137 family.

The protein localises to the lysosome membrane. In terms of biological role, lysosomal integral membrane protein that may regulate MTORC1 complex translocation to lysosomes. The chain is Integral membrane protein GPR137C (GPR137C) from Homo sapiens (Human).